We begin with the raw amino-acid sequence, 1906 residues long: DENN domain-containing protein 4C (1906 aa).

The MABP domain occupies 40-199 (KAPITDIAVI…NVFLCYKKSV (160 aa)). Residues 191 to 363 (VFLCYKKSVP…NIPFPSPQRP (173 aa)) form the uDENN domain. One can recognise a cDENN domain in the interval 384–520 (PLPLSGANFS…PCKSLLGTLR (137 aa)). In terms of domain architecture, dDENN spans 522–640 (LYQQLCSVHR…CSFVSDKDTG (119 aa)). A phosphoserine mark is found at Ser-702, Ser-736, and Ser-740. The PPR repeat unit spans residues 818-852 (DEVCYRVVMQLCGLWVNPVLAVRVLFEMKTARIKP). Polar residues predominate over residues 904–917 (SQVFSISGGQSDQG). 2 disordered regions span residues 904-942 (SQVFSISGGQSDQGYGSKDELVKEGADGHAPEEHTPPEL) and 963-984 (LQPTPEPQSPTEPPAWGSSIVK). The span at 920–939 (SKDELVKEGADGHAPEEHTP) shows a compositional bias: basic and acidic residues. Residue Thr-966 is modified to Phosphothreonine. A compositionally biased stretch (pro residues) spans 966-975 (TPEPQSPTEP). The residue at position 971 (Ser-971) is a Phosphoserine. Thr-973 is subject to Phosphothreonine. A phosphoserine mark is found at Ser-987, Ser-1000, Ser-1043, Ser-1058, Ser-1096, and Ser-1123. Polar residues predominate over residues 1154-1171 (NSLQSNSHSDQSRDTQAG). The segment at 1154 to 1184 (NSLQSNSHSDQSRDTQAGAQDPVNKRSSSYA) is disordered. 5 positions are modified to phosphoserine: Ser-1181, Ser-1221, Ser-1240, Ser-1248, and Ser-1274. Residues 1246-1317 (SCSMELHGEG…PQSPYRAYKD (72 aa)) are disordered. Basic and acidic residues predominate over residues 1281–1291 (PPARDSTETEK). Polar residues predominate over residues 1292 to 1302 (SSPAVSSSKTL). A phosphoserine mark is found at Ser-1321, Ser-1333, and Ser-1342. Disordered regions lie at residues 1410 to 1440 (SPNTSVSGLVPSELTQSNTSLGSSSSSGDVG), 1548 to 1577 (STSGDSLQSGSIPSASEPSEHKPTSSSAEP), and 1596 to 1628 (ASYTVESSDEIKKTNGDVQSVKMSSVPNSLSKR). Low complexity predominate over residues 1423–1437 (LTQSNTSLGSSSSSG). Composition is skewed to polar residues over residues 1548-1564 (STSGDSLQSGSIPSASE) and 1611-1628 (GDVQSVKMSSVPNSLSKR). Phosphoserine is present on residues Ser-1620, Ser-1624, Ser-1626, Ser-1637, and Ser-1796.

Phosphorylated in response to insulin.

It localises to the cytoplasmic vesicle membrane. It is found in the cell membrane. Its subcellular location is the cytoplasm. The protein localises to the cytosol. In terms of biological role, guanine nucleotide exchange factor (GEF) activating RAB10. Promotes the exchange of GDP to GTP, converting inactive GDP-bound RAB10 into its active GTP-bound form. Thereby, stimulates SLC2A4/GLUT4 glucose transporter-enriched vesicles delivery to the plasma membrane in response to insulin. The protein is DENN domain-containing protein 4C (Dennd4c) of Mus musculus (Mouse).